The chain runs to 201 residues: Homeobox protein ceh-28 (201 aa).

Residues 72–84 (SYYSSPSQNQRSY) are compositionally biased toward polar residues. Positions 72–94 (SYYSSPSQNQRSYQNHRQHSNPD) are disordered. Positions 104–163 (KRKPRVLFTQHQVNELEERFKKQRYVTATEREELAQCLGLTATQVKIWFQNRRYKCKRLA) form a DNA-binding region, homeobox.

It belongs to the NK-2 homeobox family.

Its subcellular location is the nucleus. Probable transcription factor that regulates neuronal differention, including synapse assembly of the cholinergic motor neuron M4. Activates expression of growth factor, neuropeptide and transcription factor genes, such as TGF-beta dbl-1, FMRFamide-like flp-5 and transcription repressor zag-1, in the M4 neuron. Required for pharynx peristalsis. The chain is Homeobox protein ceh-28 from Caenorhabditis elegans.